We begin with the raw amino-acid sequence, 361 residues long: Homer protein homolog 3 (361 aa).

The required for interaction with NFATC2 stretch occupies residues 1 to 80; sequence MSTAREQPIF…TKTSQKFGQW (80 aa). A WH1 domain is found at 1–113; sequence MSTAREQPIF…EKFQEVKEAA (113 aa). The segment at 114-169 is disordered; sequence RLAREKSQDGGELTSPALGLASHQVPPSPLVSANGPGEEKLFRSQSADAPGPTERE. Phosphoserine occurs at positions 120 and 159. 2 coiled-coil regions span residues 191–243 and 254–358; these read ALQD…SEVT and GQSL…RLAE.

It belongs to the Homer family. As to quaternary structure, tetramer. Isoform 1 and isoform 2 encode coiled-coil structures that mediate homo- and heteromultimerization. Interacts with NFATC2; interaction is calcium independent; interaction competes with PPP3CA for NFATC2 binding; interaction is reduced by AKT activation. Interacts with NFATC1 and NFATC4. Interacts with SHANK1; forms a high-order complex at least composed of SHANK1 and HOMER3; the complex formation is regulated by CAMK2A-mediated phosphorylation.

The protein resides in the cytoplasm. The protein localises to the postsynaptic density. It is found in the synapse. Postsynaptic density scaffolding protein. Binds and cross-links cytoplasmic regions of GRM1, GRM5, ITPR1, DNM3, RYR1, RYR2, SHANK1 and SHANK3. By physically linking GRM1 and GRM5 with ER-associated ITPR1 receptors, it aids the coupling of surface receptors to intracellular calcium release. Isoforms can be differently regulated and may play an important role in maintaining the plasticity at glutamatergic synapses. Negatively regulates T cell activation by inhibiting the calcineurin-NFAT pathway. Acts by competing with calcineurin/PPP3CA for NFAT protein binding, hence preventing NFAT activation by PPP3CA. The polypeptide is Homer protein homolog 3 (Homo sapiens (Human)).